Reading from the N-terminus, the 389-residue chain is GTPase Obg (389 aa).

One can recognise an Obg domain in the interval 1–159 (MKFVDEAKIL…REVLLELMLL (159 aa)). An OBG-type G domain is found at 160–333 (ADVGMLGMPN…LCWDIMEFLK (174 aa)). GTP is bound by residues 166 to 173 (GMPNAGKS), 191 to 195 (FTTLV), 213 to 216 (DIPG), 283 to 286 (NKVD), and 314 to 316 (AAI). Mg(2+) contacts are provided by S173 and T193. The segment at 362-389 (QLENPDLEDDDEDWDEEDDDGVEFIYQR) is disordered. Residues 364 to 383 (ENPDLEDDDEDWDEEDDDGV) are compositionally biased toward acidic residues.

It belongs to the TRAFAC class OBG-HflX-like GTPase superfamily. OBG GTPase family. Monomer. The cofactor is Mg(2+).

It is found in the cytoplasm. In terms of biological role, an essential GTPase which binds GTP, GDP and possibly (p)ppGpp with moderate affinity, with high nucleotide exchange rates and a fairly low GTP hydrolysis rate. Plays a role in control of the cell cycle, stress response, ribosome biogenesis and in those bacteria that undergo differentiation, in morphogenesis control. The chain is GTPase Obg from Proteus mirabilis (strain HI4320).